Consider the following 492-residue polypeptide: GDP-fucose protein O-fucosyltransferase 4 (492 aa).

Topologically, residues 1–7 (MAAGPIR) are cytoplasmic. Residues 8 to 24 (VVLVLLGVLSVCAASGH) traverse the membrane as a helical; Signal-anchor for type II membrane protein segment. Residues 25 to 492 (GSVAEREAGG…HEIFMKRQHL (468 aa)) are Lumenal-facing. A glycan (N-linked (GlcNAc...) asparagine) is linked at asparagine 166. Cysteine 389 and cysteine 392 are joined by a disulfide. N-linked (GlcNAc...) asparagine glycosylation occurs at asparagine 443.

Belongs to the glycosyltransferase 10 family.

It is found in the endoplasmic reticulum membrane. It catalyses the reaction L-threonyl-[protein] + GDP-beta-L-fucose = 3-O-(alpha-L-fucosyl)-L-threonyl-[protein] + GDP + H(+). The catalysed reaction is L-seryl-[protein] + GDP-beta-L-fucose = 3-O-(alpha-L-fucosyl)-L-seryl-[protein] + GDP + H(+). The protein operates within protein modification; protein glycosylation. Functionally, protein O-fucosyltransferase that specifically catalyzes O-fucosylation of serine or threonine residues in EMI domains of target proteins, such as MMRN1, MMRN2 and EMID1. Attaches fucose through an O-glycosidic linkage. O-fucosylation of EMI domain-containing proteins may be required for facilitating protein folding and secretion. Also shows minor alpha-(1,3)-fucosyltransferase activity toward activity toward biantennary N-glycan acceptors. However, this was tested with a library of synthetic substrates and this activity is unsure in vivo. This is GDP-fucose protein O-fucosyltransferase 4 from Homo sapiens (Human).